Reading from the N-terminus, the 101-residue chain is RNA-binding protein Hfq (101 aa).

The Sm domain occupies 9–68; it reads DPFLNALRRERVPVSIYLVNGIKLQGQIESFDQFVILLKNTVSQMVYKHAISTVVPSRPV. The tract at residues 63-101 is disordered; that stretch reads VPSRPVSHHNNNPSGGSSNYHHGSTPASQPSQPESDDAE. A compositionally biased stretch (low complexity) spans 70-86; sequence HHNNNPSGGSSNYHHGS.

This sequence belongs to the Hfq family. Homohexamer.

RNA chaperone that binds small regulatory RNA (sRNAs) and mRNAs to facilitate mRNA translational regulation in response to envelope stress, environmental stress and changes in metabolite concentrations. Also binds with high specificity to tRNAs. In Sodalis glossinidius (strain morsitans), this protein is RNA-binding protein Hfq.